Reading from the N-terminus, the 394-residue chain is Deoxyguanosinetriphosphate triphosphohydrolase-like protein (394 aa).

A disordered region spans residues 1–36; sequence MSQAPYFVPRAPYAEDPSKSKGRRFKEDESRTRTPF. The span at 25–36 shows a compositional bias: basic and acidic residues; the sequence is FKEDESRTRTPF. The HD domain maps to 70–210; the sequence is RLTHTLEVAQ…AALADDIAYN (141 aa).

It belongs to the dGTPase family. Type 2 subfamily.

The protein is Deoxyguanosinetriphosphate triphosphohydrolase-like protein of Caulobacter vibrioides (strain ATCC 19089 / CIP 103742 / CB 15) (Caulobacter crescentus).